A 157-amino-acid polypeptide reads, in one-letter code: NADPH-dependent 7-cyano-7-deazaguanine reductase (157 aa).

The active-site Thioimide intermediate is C55. D62 acts as the Proton donor in catalysis. Substrate-binding positions include V77 to S79 and H96 to E97.

The protein belongs to the GTP cyclohydrolase I family. QueF type 1 subfamily.

The protein resides in the cytoplasm. It catalyses the reaction 7-aminomethyl-7-carbaguanine + 2 NADP(+) = 7-cyano-7-deazaguanine + 2 NADPH + 3 H(+). It participates in tRNA modification; tRNA-queuosine biosynthesis. Functionally, catalyzes the NADPH-dependent reduction of 7-cyano-7-deazaguanine (preQ0) to 7-aminomethyl-7-deazaguanine (preQ1). The polypeptide is NADPH-dependent 7-cyano-7-deazaguanine reductase (Neisseria meningitidis serogroup B (strain ATCC BAA-335 / MC58)).